The chain runs to 481 residues: Protein FIZZY-RELATED 3 (481 aa).

The interval 100 to 165 (PAGGQGSASS…RKVPKTPHKV (66 aa)) is disordered. Over residues 125-136 (SNSSPSSPFSPS) the composition is skewed to low complexity. Positions 154-163 (PPRKVPKTPH) are enriched in basic residues. 7 WD repeats span residues 172–209 (QDDF…VTKL), 213–252 (GPND…RVRT), 255–292 (GHQT…DFVS), 296–335 (GHKS…PILK), 338–380 (EHTA…QLNS), 382–423 (DTGS…KVAT), and 426–465 (GHSM…KMQT).

This sequence belongs to the WD repeat CDC20/Fizzy family. In terms of assembly, associates with the APC/C complex. Interacts with CDC20-1, CDC20-2, CYCA1-1, CYCA3-4, CYCB1-1 and CYCB1-2. Binds to GIG1 and PYM.

The protein operates within protein modification; protein ubiquitination. Activator protein that regulates the ubiquitin ligase activity and substrate specificity of the anaphase promoting complex/cyclosome (APC/C). In Arabidopsis thaliana (Mouse-ear cress), this protein is Protein FIZZY-RELATED 3 (FZR3).